The primary structure comprises 422 residues: Tryptophan synthase beta chain 1 (422 aa).

Residue Lys107 is modified to N6-(pyridoxal phosphate)lysine.

It belongs to the TrpB family. In terms of assembly, tetramer of two alpha and two beta chains. Pyridoxal 5'-phosphate is required as a cofactor.

The enzyme catalyses (1S,2R)-1-C-(indol-3-yl)glycerol 3-phosphate + L-serine = D-glyceraldehyde 3-phosphate + L-tryptophan + H2O. The protein operates within amino-acid biosynthesis; L-tryptophan biosynthesis; L-tryptophan from chorismate: step 5/5. In terms of biological role, the beta subunit is responsible for the synthesis of L-tryptophan from indole and L-serine. The polypeptide is Tryptophan synthase beta chain 1 (trpB1) (Sulfurisphaera tokodaii (strain DSM 16993 / JCM 10545 / NBRC 100140 / 7) (Sulfolobus tokodaii)).